The following is an 88-amino-acid chain: uncharacterized protein (88 aa).

The first 25 residues, 1–25, serve as a signal peptide directing secretion; it reads MRAAFWVGCAALLLSACSSEPVQQA.

This is an uncharacterized protein from Escherichia coli O6:H1 (strain CFT073 / ATCC 700928 / UPEC).